The sequence spans 308 residues: GTPase Era (308 aa).

Residues 14-181 (RCGFVALIGA…KQALAAMVPP (168 aa)) form the Era-type G domain. The interval 22–29 (GAPNVGKS) is G1. A GTP-binding site is contributed by 22–29 (GAPNVGKS). The interval 48 to 52 (QTTRA) is G2. Residues 69 to 72 (DTPG) form a G3 region. Residues 69-73 (DTPGI) and 131-134 (NKVD) each bind GTP. A G4 region spans residues 131–134 (NKVD). The segment at 160–162 (ISA) is G5. One can recognise a KH type-2 domain in the interval 212 to 289 (LHQELPYQST…HLFLFVKVRE (78 aa)).

It belongs to the TRAFAC class TrmE-Era-EngA-EngB-Septin-like GTPase superfamily. Era GTPase family. In terms of assembly, monomer.

The protein localises to the cytoplasm. Its subcellular location is the cell inner membrane. An essential GTPase that binds both GDP and GTP, with rapid nucleotide exchange. Plays a role in 16S rRNA processing and 30S ribosomal subunit biogenesis and possibly also in cell cycle regulation and energy metabolism. The sequence is that of GTPase Era from Bradyrhizobium sp. (strain BTAi1 / ATCC BAA-1182).